A 127-amino-acid polypeptide reads, in one-letter code: Glycine cleavage system H protein (127 aa).

One can recognise a Lipoyl-binding domain in the interval 23–104; the sequence is TALVGLTDYA…PYEAWFAKIT (82 aa). Lys-64 bears the N6-lipoyllysine mark.

Belongs to the GcvH family. In terms of assembly, the glycine cleavage system is composed of four proteins: P, T, L and H. The cofactor is (R)-lipoate.

In terms of biological role, the glycine cleavage system catalyzes the degradation of glycine. The H protein shuttles the methylamine group of glycine from the P protein to the T protein. This is Glycine cleavage system H protein from Lachnoclostridium phytofermentans (strain ATCC 700394 / DSM 18823 / ISDg) (Clostridium phytofermentans).